Consider the following 235-residue polypeptide: MNKNVMVKGLTALTILTSLGFAENISNQPHSIAKAEKNVKEITDATKEPYNSVVAFVGGTGVVVGKNTIVTNKHIAKSNDIFKNRVSAHHSSKGKGGGNYDVKDIVEYPGKEDLAIVHVHETSTEGLNFNKNVSYTKFADGAKVKDRISVIGYPKGAQTKYKMFESTGTINHISGTFMEFDAYAQPGNSGSPVLNSKHELIGILYAGSGKDESEKNFGVYFTPQLKEFIQNNIEK.

Positions 1 to 35 are cleaved as a signal peptide; sequence MNKNVMVKGLTALTILTSLGFAENISNQPHSIAKA. Catalysis depends on charge relay system residues His74, Asp113, and Ser189.

It belongs to the peptidase S1B family.

Its subcellular location is the secreted. This is Serine protease SplA (splA) from Staphylococcus aureus (strain USA300).